Consider the following 443-residue polypeptide: Gasdermin-A2 (443 aa).

Positions 1–249 are triggers pyroptosis; sequence MSMFEDVTRA…QGSTVQMISG (249 aa). Position 9–13 (9–13) interacts with a cardiolipin; it reads RALAR. 4 beta stranded membrane-spanning segments follow: residues 78–95, 99–120, 164–179, and 183–197; these read NFSF…DVEV, MKVK…MLSV, VTLK…FSLN, and LGLQ…AVTI. A coiled-coil region spans residues 249-312; that stretch reads GEMHEDFKTL…GALDKGHEVT (64 aa).

The protein belongs to the gasdermin family. In terms of assembly, homooligomer; homooligomeric ring-shaped pore complex containing 18-36 subunits when inserted in the membrane. In terms of processing, cleavage relieves autoinhibition by releasing the N-terminal moiety (Gasdermin-A2, N-terminal) that initiates pyroptosis. In contrast to Gsdma, not cleaved by bacterial effector protein SpeB. Palmitoylated. Expressed in the gastrointestinal tract, specifically from the middle to the upper region of the gastric mucosa in the glandular stomach.

The protein localises to the cytoplasm. It is found in the perinuclear region. It localises to the cytosol. Its subcellular location is the cell membrane. Its activity is regulated as follows. The full-length protein before cleavage is inactive: intramolecular interactions between N- and C-terminal domains mediate autoinhibition in the absence of activation signal. The intrinsic pyroptosis-inducing activity is carried by the released N-terminal moiety (Gasdermin-A2, N-terminal). Its function is as follows. This form constitutes the precursor of the pore-forming protein and acts as a sensor of infection: upon bacterial infection, specifically cleaved by some bacterial effector protein, releasing the N-terminal moiety (Gasdermin-A2, N-terminal) that binds to membranes and forms pores, triggering pyroptosis. In terms of biological role, pore-forming protein that causes membrane permeabilization and pyroptosis. Released upon cleavage of Gasdermin-A2, and binds to membrane inner leaflet lipids. Homooligomerizes within the membrane and forms pores of 10-15 nanometers (nm) of inner diameter, triggering pyroptosis. Binds to membrane inner leaflet lipids, such as phosphatidylinositol (4,5)-bisphosphate. This is Gasdermin-A2 from Mus musculus (Mouse).